A 675-amino-acid polypeptide reads, in one-letter code: DNA ligase (675 aa).

Residues 33–37 (DAEYD), 82–83 (SL), and E115 contribute to the NAD(+) site. Residue K117 is the N6-AMP-lysine intermediate of the active site. The NAD(+) site is built by R138, E175, K293, and K317. 4 residues coordinate Zn(2+): C411, C414, C429, and C435. The BRCT domain maps to 594-675 (IADNPLKDKT…LIGYFTTIVS (82 aa)).

Belongs to the NAD-dependent DNA ligase family. LigA subfamily. It depends on Mg(2+) as a cofactor. The cofactor is Mn(2+).

The catalysed reaction is NAD(+) + (deoxyribonucleotide)n-3'-hydroxyl + 5'-phospho-(deoxyribonucleotide)m = (deoxyribonucleotide)n+m + AMP + beta-nicotinamide D-nucleotide.. Its function is as follows. DNA ligase that catalyzes the formation of phosphodiester linkages between 5'-phosphoryl and 3'-hydroxyl groups in double-stranded DNA using NAD as a coenzyme and as the energy source for the reaction. It is essential for DNA replication and repair of damaged DNA. The polypeptide is DNA ligase (Glaesserella parasuis serovar 5 (strain SH0165) (Haemophilus parasuis)).